The sequence spans 1040 residues: DIS3-like exonuclease 1 (1040 aa).

The region spanning 232 to 310 (AGIKSGRYKQ…KGRTGALCEN (79 aa)) is the CSD1 domain. The CSD2 domain occupies 360 to 426 (VLVMPWDYRI…AEIATILVEN (67 aa)). Residues 459–808 (RLDLRETHLV…VHRLLLAAVN (350 aa)) form the RNB domain.

This sequence belongs to the RNR ribonuclease family. In terms of assembly, component of the RNA exosome complex. Mg(2+) serves as cofactor.

It localises to the cytoplasm. It carries out the reaction Exonucleolytic cleavage in the 3'- to 5'-direction to yield nucleoside 5'-phosphates.. Catalytic component of the RNA exosome complex which has 3'-&gt;5' exoribonuclease activity and participates in a multitude of cellular RNA processing and degradation events. The polypeptide is DIS3-like exonuclease 1 (dis3l) (Xenopus laevis (African clawed frog)).